Here is a 310-residue protein sequence, read N- to C-terminus: Small ribosomal subunit protein uS2 (310 aa).

Residues 249–272 (WERDLLEGEKAEKKDDAEAAEKPA) are compositionally biased toward basic and acidic residues. The disordered stretch occupies residues 249-310 (WERDLLEGEK…EAPAADAEQA (62 aa)). A compositionally biased stretch (low complexity) spans 273–310 (EAPAAEAPAAEAAEAPAAEAAPAEEPAAEAPAADAEQA).

Belongs to the universal ribosomal protein uS2 family.

The sequence is that of Small ribosomal subunit protein uS2 (rpsB) from Streptomyces coelicolor (strain ATCC BAA-471 / A3(2) / M145).